The primary structure comprises 472 residues: Proline--tRNA ligase (472 aa).

Belongs to the class-II aminoacyl-tRNA synthetase family. ProS type 3 subfamily. As to quaternary structure, homodimer.

It localises to the cytoplasm. It carries out the reaction tRNA(Pro) + L-proline + ATP = L-prolyl-tRNA(Pro) + AMP + diphosphate. Catalyzes the attachment of proline to tRNA(Pro) in a two-step reaction: proline is first activated by ATP to form Pro-AMP and then transferred to the acceptor end of tRNA(Pro). This is Proline--tRNA ligase from Ureaplasma parvum serovar 3 (strain ATCC 27815 / 27 / NCTC 11736).